The following is a 391-amino-acid chain: Trehalose-phosphate phosphatase (391 aa).

Asp-147 functions as the Nucleophile in the catalytic mechanism. Residues Asp-147, Asp-149, and Asp-330 each contribute to the Mg(2+) site. 147–149 serves as a coordination point for substrate; sequence DFD.

It belongs to the trehalose phosphatase family. Requires Mg(2+) as cofactor.

The enzyme catalyses alpha,alpha-trehalose 6-phosphate + H2O = alpha,alpha-trehalose + phosphate. Its pathway is glycan biosynthesis; trehalose biosynthesis. In terms of biological role, removes the phosphate from trehalose 6-phosphate to produce free trehalose. The protein is Trehalose-phosphate phosphatase (otsB) of Mycolicibacterium paratuberculosis (strain ATCC BAA-968 / K-10) (Mycobacterium paratuberculosis).